The following is a 971-amino-acid chain: Polyamine-modulated factor 1-binding protein 1 (971 aa).

Coiled-coil stretches lie at residues 37–69, 117–229, 282–325, 355–680, 706–827, and 879–916; these read NKQYHLRQLQQLKKKLLTLQQELEIRTQELQAS, EKLH…ACSN, LHVE…LREE, QKLS…SAIQ, QDDL…DEKE, and IAKLTGEKDHLHNVMAHLQQENKKLKNEIEEKKLKAGT.

As to expression, expressed in testis and more specifically in ODF, the sperm tail specific cytoskeletal structure. Also expressed in epididymides and brain.

It is found in the cell projection. Its subcellular location is the cilium. The protein localises to the flagellum. Required for normal spermatogenesis. It functions as a scaffold protein that attaches the sperm head-tail connecting piece to the nuclear envelope, thus maintaining sperm head and tail integrity. May also be involved in the general organization of cellular cytoskeleton. This is Polyamine-modulated factor 1-binding protein 1 (Pmfbp1) from Rattus norvegicus (Rat).